The primary structure comprises 1087 residues: Exoglucanase XynX (1087 aa).

The signal sequence occupies residues 1–30 (MKNNLSKFVSIFTAFIMIFGTSLFFPHVSA). Residues 37-188 (ANLVSNGDFE…YIDDVVVTPQ (152 aa)) form the CBM-cenC domain. Residues 204–527 (QNDIPDLSSV…KPAYWAIADP (324 aa)) enclose the GH10 domain. The Proton donor role is filled by Glu-347. Residue Asp-389 is part of the active site. The Nucleophile role is filled by Glu-452. SLH domains follow at residues 903-966 (KKSV…YNGE), 967-1025 (FSDV…KEEN), and 1028-1087 (ATSF…SNNL).

It belongs to the glycosyl hydrolase 10 (cellulase F) family.

The catalysed reaction is Hydrolysis of (1-&gt;4)-beta-D-glucosidic linkages in cellulose and cellotetraose, releasing cellobiose from the non-reducing ends of the chains.. In Acetivibrio thermocellus (Hungateiclostridium thermocellum), this protein is Exoglucanase XynX (xynX).